The primary structure comprises 383 residues: Na(+)/H(+) antiporter NhaA (383 aa).

Transmembrane regions (helical) follow at residues 14 to 34 (AGGI…NSPL), 47 to 67 (FGMS…FLLI), 87 to 107 (IFPA…YVAF), 117 to 137 (GWAI…ALLG), 146 to 166 (VFLL…IALF), 171 to 191 (LSSM…MLNA), 205 to 225 (AILW…GVVI), 252 to 272 (VAFG…LEGV), 280 to 300 (MLPL…IFSF), 321 to 341 (IFAV…ISSL), and 356 to 376 (LGIL…LHFS).

The protein belongs to the NhaA Na(+)/H(+) (TC 2.A.33) antiporter family.

It is found in the cell inner membrane. The catalysed reaction is Na(+)(in) + 2 H(+)(out) = Na(+)(out) + 2 H(+)(in). It catalyses the reaction Li(+)(in) + 2 H(+)(out) = Li(+)(out) + 2 H(+)(in). Its activity is regulated as follows. Activity is regulated by pH. Active at alkaline pH. Amiloride strongly reduces affinity for Na(+), but does not change the Vmax. In terms of biological role, na(+)/H(+) antiporter that extrudes sodium in exchange for external protons. Can also transport lithium and potassium. The polypeptide is Na(+)/H(+) antiporter NhaA (Vibrio parahaemolyticus serotype O3:K6 (strain RIMD 2210633)).